Consider the following 1037-residue polypeptide: Probable inorganic carbon transporter subunit DabA 1 (1037 aa).

Positions 460, 462, 719, and 734 each coordinate Zn(2+).

This sequence belongs to the inorganic carbon transporter (TC 9.A.2) DabA family. In terms of assembly, forms a complex with DabB. The cofactor is Zn(2+).

It is found in the cell inner membrane. Part of an energy-coupled inorganic carbon pump. This is Probable inorganic carbon transporter subunit DabA 1 from Nitrobacter winogradskyi (strain ATCC 25391 / DSM 10237 / CIP 104748 / NCIMB 11846 / Nb-255).